A 362-amino-acid polypeptide reads, in one-letter code: 3-isopropylmalate dehydrogenase (362 aa).

4 residues coordinate substrate: arginine 97, arginine 107, arginine 135, and aspartate 225. Mg(2+)-binding residues include aspartate 225, aspartate 249, and aspartate 253. 283–295 (GSAPDIAHKNLAN) lines the NAD(+) pocket.

It belongs to the isocitrate and isopropylmalate dehydrogenases family. LeuB type 1 subfamily. In terms of assembly, homodimer. Requires Mg(2+) as cofactor. It depends on Mn(2+) as a cofactor.

It localises to the cytoplasm. The enzyme catalyses (2R,3S)-3-isopropylmalate + NAD(+) = 4-methyl-2-oxopentanoate + CO2 + NADH. Its pathway is amino-acid biosynthesis; L-leucine biosynthesis; L-leucine from 3-methyl-2-oxobutanoate: step 3/4. Functionally, catalyzes the oxidation of 3-carboxy-2-hydroxy-4-methylpentanoate (3-isopropylmalate) to 3-carboxy-4-methyl-2-oxopentanoate. The product decarboxylates to 4-methyl-2 oxopentanoate. This chain is 3-isopropylmalate dehydrogenase, found in Prochlorococcus marinus (strain SARG / CCMP1375 / SS120).